The sequence spans 389 residues: Sulfate adenylyltransferase (389 aa).

Belongs to the sulfate adenylyltransferase family.

The enzyme catalyses sulfate + ATP + H(+) = adenosine 5'-phosphosulfate + diphosphate. Its pathway is sulfur metabolism; hydrogen sulfide biosynthesis; sulfite from sulfate: step 1/3. This Desulforamulus reducens (strain ATCC BAA-1160 / DSM 100696 / MI-1) (Desulfotomaculum reducens) protein is Sulfate adenylyltransferase.